The chain runs to 388 residues: MFKATTSARHRPGQGNSLSTLMARYNNQGLQRYSLKDKEHKIRRRKRSWGFQHSVILKNSWALPLLLTIVLPVIYAIHPVESKFFGHFILLSYRHGSVTDGMAFPVAQYKKGLWDLAFVAFYANALFLARKFIMKRLLRPLALKNNVSTMGKQQRFMEQMYTACYFAVMGPFGLYVMKTTPGLWIFQTHGMYDSYPHRSLGPAIKFYYLLQAAYWVQQSVVLVLRLEKPRKDHMELTVHHIITITLIALSYRFHFTHIGISMYITHDISDLFLATSKSLNYLSHRLQTPAFCLCVIAWIYLRHYTNWRILYSVLTEFRTVGPFELDWEAEQYKCQLSQFITFGLLATLQTLNIIWLYCLLRNAYRLLFLRIAKDDRSDTDKSEIEHGD.

The next 2 helical transmembrane spans lie at 60-80 (SWALPLLLTIVLPVIYAIHPV) and 113-133 (LWDLAFVAFYANALFLARKFI). Asn146 is a glycosylation site (N-linked (GlcNAc...) asparagine). One can recognise a TLC domain in the interval 151-368 (GKQQRFMEQM…LLRNAYRLLF (218 aa)). Transmembrane regions (helical) follow at residues 166-186 (FAVMGPFGLYVMKTTPGLWIF), 204-224 (IKFYYLLQAAYWVQQSVVLVL), 241-261 (IITITLIALSYRFHFTHIGIS), and 339-359 (FITFGLLATLQTLNIIWLYCL).

It belongs to the sphingosine N-acyltransferase family.

The protein resides in the endoplasmic reticulum membrane. Its pathway is mycotoxin biosynthesis. Its function is as follows. Sphingosine N-acyltransferase-like protein; part of the gene cluster that mediates the biosynthesis of fumonisins B1 (FB1), B2 (FB2), B3 (FB3), and B4 (FB4), which are carcinogenic mycotoxins. May contribute to the biosynthesis of ceramide via interaction with Cer3. Does not confer resistance to FB1. The biosynthesis starts with the FUM1-catalyzed carbon chain assembly from one molecule of acetyl-CoA, eight molecules of malonyl-CoA, and two molecules of methionine (in S-adenosyl form). The C18 polyketide chain is released from the enzyme by a nucleophilic attack of a carbanion, which is derived from R-carbon of alanine by decarboxylation, on the carbonyl carbon of polyketide acyl chain. This step is catalyzed by the pyridoxal 5'-phosphate-dependent aminoacyl transferase FUM8. The resultant 3-keto intermediate is then stereospecifically reduced to a 3-hydroxyl product by reductase FUM13. Subsequent oxidations at C-10 by the cytochrome P450 monooxygenase FUM2, C-14 and C-15 by FUM6, FUM12 or FUM15, tricarballylic esterification of the hydroxyl groups on C-14 and C-15 by acyltransferase FUM14, and C-5 hydroxylation by 2-keto-glutarate-dependent dioxygenase FUM3 furnish the biosynthesis of fumonisins. The tricarballylic moieties are most likely derived from the citric acid cycle, and their addition to the carbon backbone may involve FUM7, FUM10, FUM11 and FUM14. The polypeptide is Sphingosine N-acyltransferase-like protein FUM17 (Gibberella moniliformis (strain M3125 / FGSC 7600) (Maize ear and stalk rot fungus)).